We begin with the raw amino-acid sequence, 313 residues long: HPr kinase/phosphorylase (313 aa).

Active-site residues include H140 and K161. G155–S162 is a binding site for ATP. Position 162 (S162) interacts with Mg(2+). Residue D179 is the Proton acceptor; for phosphorylation activity. Proton donor; for dephosphorylation activity of the active site. Residues I203–N212 are important for the catalytic mechanism of both phosphorylation and dephosphorylation. Residue E204 participates in Mg(2+) binding. The active site involves R246. The segment at P267–R272 is important for the catalytic mechanism of dephosphorylation.

The protein belongs to the HPrK/P family. In terms of assembly, homohexamer. Mg(2+) serves as cofactor.

The catalysed reaction is [HPr protein]-L-serine + ATP = [HPr protein]-O-phospho-L-serine + ADP + H(+). The enzyme catalyses [HPr protein]-O-phospho-L-serine + phosphate + H(+) = [HPr protein]-L-serine + diphosphate. Its function is as follows. Catalyzes the ATP- as well as the pyrophosphate-dependent phosphorylation of a specific serine residue in HPr, a phosphocarrier protein of the phosphoenolpyruvate-dependent sugar phosphotransferase system (PTS). HprK/P also catalyzes the pyrophosphate-producing, inorganic phosphate-dependent dephosphorylation (phosphorolysis) of seryl-phosphorylated HPr (P-Ser-HPr). The polypeptide is HPr kinase/phosphorylase (Azoarcus sp. (strain BH72)).